A 176-amino-acid polypeptide reads, in one-letter code: Isopentenyl-diphosphate Delta-isomerase (176 aa).

Mn(2+) contacts are provided by His-24 and His-30. The Nudix hydrolase domain maps to Leu-28–Cys-160. Residue Cys-65 is part of the active site. His-67 contributes to the Mn(2+) binding site. A Mg(2+)-binding site is contributed by Glu-85. Glu-110 and Glu-112 together coordinate Mn(2+). Glu-112 is a catalytic residue.

This sequence belongs to the IPP isomerase type 1 family. Requires Mg(2+) as cofactor. Mn(2+) is required as a cofactor.

It is found in the cytoplasm. The enzyme catalyses isopentenyl diphosphate = dimethylallyl diphosphate. It participates in isoprenoid biosynthesis; dimethylallyl diphosphate biosynthesis; dimethylallyl diphosphate from isopentenyl diphosphate: step 1/1. In terms of biological role, catalyzes the 1,3-allylic rearrangement of the homoallylic substrate isopentenyl (IPP) to its highly electrophilic allylic isomer, dimethylallyl diphosphate (DMAPP). The polypeptide is Isopentenyl-diphosphate Delta-isomerase (Burkholderia multivorans (strain ATCC 17616 / 249)).